Reading from the N-terminus, the 207-residue chain is Proteasome subunit beta (207 aa).

A propeptide spans 1–7 (MVEAFKG) (removed in mature form; by autocatalysis). The active-site Nucleophile is the Thr8.

It belongs to the peptidase T1B family. In terms of assembly, the 20S proteasome core is composed of 14 alpha and 14 beta subunits that assemble into four stacked heptameric rings, resulting in a barrel-shaped structure. The two inner rings, each composed of seven catalytic beta subunits, are sandwiched by two outer rings, each composed of seven alpha subunits. The catalytic chamber with the active sites is on the inside of the barrel. Has a gated structure, the ends of the cylinder being occluded by the N-termini of the alpha-subunits. Is capped at one or both ends by the proteasome regulatory ATPase, PAN.

It localises to the cytoplasm. It carries out the reaction Cleavage of peptide bonds with very broad specificity.. Its activity is regulated as follows. The formation of the proteasomal ATPase PAN-20S proteasome complex, via the docking of the C-termini of PAN into the intersubunit pockets in the alpha-rings, triggers opening of the gate for substrate entry. Interconversion between the open-gate and close-gate conformations leads to a dynamic regulation of the 20S proteasome proteolysis activity. Component of the proteasome core, a large protease complex with broad specificity involved in protein degradation. The sequence is that of Proteasome subunit beta from Methanothrix thermoacetophila (strain DSM 6194 / JCM 14653 / NBRC 101360 / PT) (Methanosaeta thermophila).